The following is an 895-amino-acid chain: Stonin-2 (895 aa).

Disordered regions lie at residues 15-119 (WVSF…PPHK), 145-222 (SESS…APPV), and 234-280 (EDNE…KSTL). Residues 64–73 (SHSEQDDSSE) show a composition bias toward basic and acidic residues. Residues 145–193 (SESSWTTHSEDTSSPSVAPSYTDLQLINTEEQASGRASGTDSTDNSSSL) are compositionally biased toward polar residues. The span at 241-251 (PSPPVPSPKKP) shows a compositional bias: pro residues. Position 253 is a phosphothreonine (threonine 253). Phosphoserine is present on residues serine 278 and serine 299. 2 short sequence motifs (NPF) span residues 310–312 (NPF) and 326–328 (NPF). Residues 386 to 421 (QIDDPDPVGNTALPDDDPTASVELDAPSPASALSQP) are disordered. Residues 424–557 (GWPMMLRIPE…DLPVLSMDLS (134 aa)) form the SHD domain. In terms of domain architecture, MHD spans 565 to 872 (EEEITVDVRD…AHYSYKVEIE (308 aa)). Serine 759 is modified (phosphoserine).

This sequence belongs to the Stoned B family. In terms of assembly, interacts with the second C2 domain of synaptotagmins SYT1 and SYT2. Interacts with EPS15, EPS15R and ITSN1. Interacts indirectly with the AP-2 adapter complex. Interacts with TOR1A and COPS4; the interaction controls STON2 protein stability. In terms of processing, phosphorylated in vitro by PKD. Neddylated; deneddylated via its interaction with the COP9 signalosome (CSN) complex through TOR1A and COPS4. Post-translationally, ubiquitinated; leading to its degradation.

It localises to the cytoplasm. The protein resides in the membrane. It is found in the synapse. Its subcellular location is the synaptosome. In terms of biological role, adapter protein involved in endocytic machinery. Involved in the synaptic vesicle recycling. May facilitate clathrin-coated vesicle uncoating. This chain is Stonin-2 (Ston2), found in Mus musculus (Mouse).